The chain runs to 243 residues: Ribosomal RNA small subunit methyltransferase J (243 aa).

S-adenosyl-L-methionine is bound by residues 112–113 (ER) and D164.

The protein belongs to the methyltransferase superfamily. RsmJ family.

It localises to the cytoplasm. It carries out the reaction guanosine(1516) in 16S rRNA + S-adenosyl-L-methionine = N(2)-methylguanosine(1516) in 16S rRNA + S-adenosyl-L-homocysteine + H(+). Functionally, specifically methylates the guanosine in position 1516 of 16S rRNA. This is Ribosomal RNA small subunit methyltransferase J from Legionella pneumophila (strain Corby).